The sequence spans 101 residues: uncharacterized protein (101 aa).

Positions 65 to 79 are enriched in low complexity; it reads QEAAAPAGPQEPAEA. The interval 65 to 101 is disordered; it reads QEAAAPAGPQEPAEASGDAGKKEEVEEEEIEIDFGMF. The segment covering 89–101 has biased composition (acidic residues); the sequence is VEEEEIEIDFGMF.

This is an uncharacterized protein from Encephalitozoon cuniculi (strain GB-M1) (Microsporidian parasite).